A 173-amino-acid chain; its full sequence is Large ribosomal RNA subunit accumulation protein YceD (173 aa).

The protein belongs to the DUF177 domain family.

Plays a role in synthesis, processing and/or stability of 23S rRNA. This is Large ribosomal RNA subunit accumulation protein YceD (yceD) from Escherichia coli O157:H7.